The primary structure comprises 279 residues: MEAVVNLYHELMKHADPRIQSYPLMGSPLLITSILLTYVYFILSLGPRIMANRKPFQLRGFMIVYNFSLVILSLYIVYEFLMSGWLSTYTWRCDPIDFSNSPEALRMVRVAWLFMLSKVIELMDTVIFILRKKDGQVTFLHVFHHSVLPWSWWWGIKIAPGGMGSFHAMINSSVHVVMYLYYGLSALGPVAQPYLWWKKHMTAIQLIQFVLVSLHISQYYFMPSCNYQYPIIIHLIWMYGTIFFILFSNFWYHSYTKGKRLPRAVQQNGAPATTKVKAN.

Methionine 1 is modified (N-acetylmethionine). Transmembrane regions (helical) follow at residues 23 to 43, 61 to 81, 110 to 130, 137 to 154, 176 to 196, 203 to 223, and 231 to 251; these read PLMGSPLLITSILLTYVYFIL, FMIVYNFSLVILSLYIVYEFL, VAWLFMLSKVIELMDTVIFIL, VTFLHVFHHSVLPWSWWW, VVMYLYYGLSALGPVAQPYLW, AIQLIQFVLVSLHISQYYFMP, and IIIHLIWMYGTIFFILFSNFW. The Di-lysine motif signature appears at 275-279; sequence KVKAN.

It belongs to the ELO family. ELOVL1 subfamily. As to quaternary structure, interacts with LASS2, TECR and HSD17B12. Interacts with TECR. As to expression, expressed in a broad variety of tissues. Highly expressed in stomach, lung, kidney, skin and intestine. Moderately expressed in white adipose tissue, liver, spleen, brain, brown adipose tissue, heart and muscle. Weakly expressed in testis.

It localises to the endoplasmic reticulum membrane. It catalyses the reaction a very-long-chain acyl-CoA + malonyl-CoA + H(+) = a very-long-chain 3-oxoacyl-CoA + CO2 + CoA. It carries out the reaction eicosanoyl-CoA + malonyl-CoA + H(+) = 3-oxodocosanoyl-CoA + CO2 + CoA. The catalysed reaction is docosanoyl-CoA + malonyl-CoA + H(+) = 3-oxotetracosanoyl-CoA + CO2 + CoA. The enzyme catalyses tetracosanoyl-CoA + malonyl-CoA + H(+) = 3-oxohexacosanoyl-CoA + CO2 + CoA. It catalyses the reaction (11Z)-eicosenoyl-CoA + malonyl-CoA + H(+) = 3-oxo-(13Z)-docosenoyl-CoA + CO2 + CoA. It carries out the reaction (13Z)-docosenoyl-CoA + malonyl-CoA + H(+) = 3-oxo-(15Z)-tetracosenoyl-CoA + CO2 + CoA. It participates in lipid metabolism; fatty acid biosynthesis. Catalyzes the first and rate-limiting reaction of the four reactions that constitute the long-chain fatty acids elongation cycle. This endoplasmic reticulum-bound enzymatic process allows the addition of 2 carbons to the chain of long- and very long-chain fatty acids (VLCFAs) per cycle. Condensing enzyme that exhibits activity toward saturated and monounsaturated acyl-CoA substrates, with the highest activity towards C22:0 acyl-CoA. May participate in the production of both saturated and monounsaturated VLCFAs of different chain lengths that are involved in multiple biological processes as precursors of membrane lipids and lipid mediators. Important for saturated C24:0 and monounsaturated C24:1 sphingolipid synthesis. Indirectly inhibits RPE65 via production of VLCFAs. The chain is Very long chain fatty acid elongase 1 from Mus musculus (Mouse).